The following is a 511-amino-acid chain: Ribonuclease E/G-like protein (511 aa).

One can recognise an S1 motif domain in the interval 35–117; it reads SDIYLGTVDK…LTANITLSGR (83 aa). Residues Asp296 and Asp339 each coordinate Mg(2+).

This sequence belongs to the RNase E/G family. Requires Mg(2+) as cofactor.

It is found in the plastid. The protein resides in the chloroplast stroma. Involved in intercistronic processing of primary transcripts from chloroplast operons. The endonucleolytic activity of the enzyme depends on the number of phosphates at the 5' end, is inhibited by structured RNA, and preferentially cleaves A/U-rich sequences. This is Ribonuclease E/G-like protein (rne) from Porphyra purpurea (Red seaweed).